The sequence spans 271 residues: Phosphonoacetaldehyde hydrolase (271 aa).

Asp12 functions as the Nucleophile in the catalytic mechanism. Residues Asp12 and Ala14 each coordinate Mg(2+). Catalysis depends on Lys54, which acts as the Schiff-base intermediate with substrate. Asp188 is a Mg(2+) binding site.

It belongs to the HAD-like hydrolase superfamily. PhnX family. In terms of assembly, homodimer. Mg(2+) serves as cofactor.

The enzyme catalyses phosphonoacetaldehyde + H2O = acetaldehyde + phosphate + H(+). Functionally, involved in phosphonate degradation. The polypeptide is Phosphonoacetaldehyde hydrolase (Aliivibrio salmonicida (strain LFI1238) (Vibrio salmonicida (strain LFI1238))).